Here is a 334-residue protein sequence, read N- to C-terminus: Uracil-DNA glycosylase (334 aa).

The span at 1–17 shows a compositional bias: basic residues; sequence MKRACSRSPSPRRRPSS. 2 disordered regions span residues 1–63 and 79–104; these read MKRA…CRSS and VTFS…AATS. Residues 40–50 show a composition bias toward polar residues; the sequence is GASNDASTETR. Catalysis depends on aspartate 178, which acts as the Proton acceptor.

This sequence belongs to the uracil-DNA glycosylase (UDG) superfamily. UNG family.

It localises to the host nucleus. The catalysed reaction is Hydrolyzes single-stranded DNA or mismatched double-stranded DNA and polynucleotides, releasing free uracil.. In terms of biological role, excises uracil residues from the DNA which can arise as a result of misincorporation of dUMP residues by DNA polymerase or deamination of cytosines. Therefore may reduce deleterious uracil incorporation into the viral genome, particularly in terminally differentiated cells which lack DNA repair enzymes. This chain is Uracil-DNA glycosylase, found in Human herpesvirus 1 (strain 17) (HHV-1).